A 209-amino-acid chain; its full sequence is CASP-like protein 1A1 (209 aa).

The segment at 1–26 (MEEAKHNEAEEAQGIEAREAKQIEAG) is disordered. At 1-49 (MEEAKHNEAEEAQGIEAREAKQIEAGETSRSSRKLITFEPKLVINKGIS) the chain is on the cytoplasmic side. A helical transmembrane segment spans residues 50-70 (VLGFVLRLFAVFGTIGSALAM). The Extracellular segment spans residues 71 to 95 (GTTHESVVSLSQLVLLKVKYSDLPT). The helical transmembrane segment at 96–116 (LMFFVVANAISGGYLVLSLPV) threads the bilayer. The Cytoplasmic segment spans residues 117–130 (SIFHIFSTQAKTSR). Residues 131–151 (IILLVVDTVMLALVSSGASAA) form a helical membrane-spanning segment. The Extracellular portion of the chain corresponds to 152-183 (TATVYLAHEGNTTANWPPICQQFDGFCERISG). The N-linked (GlcNAc...) asparagine glycan is linked to N162. Residues 184 to 204 (SLIGSFCAVILLMLIVINSAI) form a helical membrane-spanning segment. At 205 to 209 (SLSRH) the chain is on the cytoplasmic side.

It belongs to the Casparian strip membrane proteins (CASP) family. As to quaternary structure, homodimer and heterodimers. As to expression, expressed in the root endodermis.

The protein localises to the cell membrane. The sequence is that of CASP-like protein 1A1 from Arabidopsis thaliana (Mouse-ear cress).